The sequence spans 326 residues: Cell surface glycoprotein CD200 receptor 1 (326 aa).

The signal sequence occupies residues 1–25; the sequence is MFCFWRTSALAVLLIWGVFVAGSSC. The Extracellular portion of the chain corresponds to 26 to 238; that stretch reads TDKNQTTQNN…SRGGNQSLRP (213 aa). 11 N-linked (GlcNAc...) asparagine glycosylation sites follow: N29, N34, N35, N44, N93, N101, N159, N192, N207, N221, and N233. In terms of domain architecture, Ig-like V-type spans 51–136; sequence IGTKALLCCF…YTCETVTPEG (86 aa). Intrachain disulfides connect C58–C129 and C82–C97. The region spanning 138–229 is the Ig-like C2-type domain; it reads FEKNYDLQVL…GNQSLSIELS (92 aa). 2 cysteine pairs are disulfide-bonded: C164–C213 and C183–C201. A helical transmembrane segment spans residues 239–259; that stretch reads YIPYIIPSIIILIIIGCICLL. At 260–326 the chain is on the cytoplasmic side; sequence KISGFRKCKL…DCLTLSAIGI (67 aa).

It belongs to the CD200R family. CD200 and CD200R1 interact via their respective N-terminal Ig-like domains. As to expression, expressed in granulocytes, monocytes, most T-cells and a subset of NK, NKT and B-cells (at protein level). Expressed in the spleen, lung, liver, testis, bone marrow, lymph nodes, spinal cord, kidney, uterus and small intestine. Expressed in mast and dendritic cells. Expressed in the lung of N.brasiliensis-infected mice.

The protein localises to the cell membrane. In terms of biological role, inhibitory receptor for the CD200/OX2 cell surface glycoprotein. Limits inflammation by inhibiting the expression of pro-inflammatory molecules including TNF-alpha, interferons, and inducible nitric oxide synthase (iNOS) in response to selected stimuli. The chain is Cell surface glycoprotein CD200 receptor 1 (Cd200r1) from Mus musculus (Mouse).